The chain runs to 500 residues: Lysine--tRNA ligase (500 aa).

Mg(2+) contacts are provided by E409 and E416.

It belongs to the class-II aminoacyl-tRNA synthetase family. As to quaternary structure, homodimer. It depends on Mg(2+) as a cofactor.

Its subcellular location is the cytoplasm. It carries out the reaction tRNA(Lys) + L-lysine + ATP = L-lysyl-tRNA(Lys) + AMP + diphosphate. This is Lysine--tRNA ligase from Lysinibacillus sphaericus (strain C3-41).